A 252-amino-acid polypeptide reads, in one-letter code: MAAAKRKLVFDSPNESSVNFETSPNFPKEWKIDGMDIENRIRNFRDELQAQGLCPVGSAGIDPKSKFRTEYRRIVNANTILTDVLRLQQKEGEWLKNASGLLEYDIQSLHARRDHLDNAVEQLKSQLSRLDSSVAILKSQQMAVKSVLELREDEYLADDADSNLPDEFLKFSKISKLCAASLQSYENVKKRNEEMQKELIAERNRQRKLHDATMKMMEEKERVRVEQLEDLFKDFSLEQLTRLRDRIRQAQK.

Residues 106–140 (IQSLHARRDHLDNAVEQLKSQLSRLDSSVAILKSQ) are a coiled coil.

This is an uncharacterized protein from Caenorhabditis elegans.